A 513-amino-acid polypeptide reads, in one-letter code: Aspartyl protease family protein 1 (513 aa).

The first 21 residues, Met-1 to Ser-21, serve as a signal peptide directing secretion. A Peptidase A1 domain is found at His-104–Lys-445. Catalysis depends on residues Asp-122 and Asp-327. The interval Gly-452–Asn-488 is disordered. The span at Ser-455 to Ser-474 shows a compositional bias: low complexity. Ser-484 carries the GPI-anchor amidated serine lipid modification. A propeptide spans Gln-485–Leu-513 (removed in mature form).

This sequence belongs to the peptidase A1 family.

The protein localises to the cell membrane. Aspartyl protease. Not able to cleave BAG6. The polypeptide is Aspartyl protease family protein 1 (Arabidopsis thaliana (Mouse-ear cress)).